A 103-amino-acid chain; its full sequence is Large ribosomal subunit protein bL21 (103 aa).

Belongs to the bacterial ribosomal protein bL21 family. As to quaternary structure, part of the 50S ribosomal subunit. Contacts protein L20.

Its function is as follows. This protein binds to 23S rRNA in the presence of protein L20. The sequence is that of Large ribosomal subunit protein bL21 from Haemophilus ducreyi (strain 35000HP / ATCC 700724).